Consider the following 210-residue polypeptide: dTTP/UTP pyrophosphatase (210 aa).

The Proton acceptor role is filled by Asp-89.

This sequence belongs to the Maf family. YhdE subfamily. A divalent metal cation is required as a cofactor.

The protein localises to the cytoplasm. It catalyses the reaction dTTP + H2O = dTMP + diphosphate + H(+). It carries out the reaction UTP + H2O = UMP + diphosphate + H(+). Its function is as follows. Nucleoside triphosphate pyrophosphatase that hydrolyzes dTTP and UTP. May have a dual role in cell division arrest and in preventing the incorporation of modified nucleotides into cellular nucleic acids. The polypeptide is dTTP/UTP pyrophosphatase (Burkholderia thailandensis (strain ATCC 700388 / DSM 13276 / CCUG 48851 / CIP 106301 / E264)).